Consider the following 220-residue polypeptide: Pyridoxine/pyridoxamine 5'-phosphate oxidase (220 aa).

Substrate contacts are provided by residues 13-16 (RVEY) and lysine 77. FMN-binding positions include 72–77 (RTVLCK), 87–88 (FT), lysine 94, and glutamine 116. Substrate contacts are provided by tyrosine 134, arginine 138, and serine 142. Residues 151–152 (QS) and tryptophan 197 contribute to the FMN site. Position 203–205 (203–205 (RLH)) interacts with substrate. Arginine 207 lines the FMN pocket.

Belongs to the pyridoxamine 5'-phosphate oxidase family. Homodimer. FMN is required as a cofactor.

The enzyme catalyses pyridoxamine 5'-phosphate + O2 + H2O = pyridoxal 5'-phosphate + H2O2 + NH4(+). The catalysed reaction is pyridoxine 5'-phosphate + O2 = pyridoxal 5'-phosphate + H2O2. It participates in cofactor metabolism; pyridoxal 5'-phosphate salvage; pyridoxal 5'-phosphate from pyridoxamine 5'-phosphate: step 1/1. The protein operates within cofactor metabolism; pyridoxal 5'-phosphate salvage; pyridoxal 5'-phosphate from pyridoxine 5'-phosphate: step 1/1. In terms of biological role, catalyzes the oxidation of either pyridoxine 5'-phosphate (PNP) or pyridoxamine 5'-phosphate (PMP) into pyridoxal 5'-phosphate (PLP). In Mycolicibacterium paratuberculosis (strain ATCC BAA-968 / K-10) (Mycobacterium paratuberculosis), this protein is Pyridoxine/pyridoxamine 5'-phosphate oxidase.